The chain runs to 285 residues: GPN-loop GTPase 3 (285 aa).

Glycine 13 to threonine 18 contacts GTP. The Gly-Pro-Asn (GPN)-loop; involved in dimer interface motif lies at glycine 72–asparagine 74. Threonine 174–aspartate 177 lines the GTP pocket. The segment at lysine 261–proline 285 is disordered. The segment covering glutamate 265 to phenylalanine 277 has biased composition (acidic residues).

This sequence belongs to the GPN-loop GTPase family. As to quaternary structure, heterodimer with gpn1. Binds to RNA polymerase II (RNAPII).

Small GTPase required for proper localization of RNA polymerase II (RNAPII). May act at an RNAP assembly step prior to nuclear import. In Xenopus tropicalis (Western clawed frog), this protein is GPN-loop GTPase 3.